The sequence spans 401 residues: Phosphoglycerate kinase (401 aa).

Substrate is bound by residues D24–N26, R40, H63–R66, R122, and R155. ATP-binding positions include K206, G297, E328, and G357 to S360.

It belongs to the phosphoglycerate kinase family. Monomer.

It is found in the cytoplasm. The enzyme catalyses (2R)-3-phosphoglycerate + ATP = (2R)-3-phospho-glyceroyl phosphate + ADP. It participates in carbohydrate degradation; glycolysis; pyruvate from D-glyceraldehyde 3-phosphate: step 2/5. The polypeptide is Phosphoglycerate kinase (Synechococcus sp. (strain CC9605)).